Reading from the N-terminus, the 372-residue chain is Envelope phospholipase OPG057 (372 aa).

The YPPL signature appears at 153–156 (YPPL). 2 S-palmitoyl cysteine; by host lipidation sites follow: Cys185 and Cys186. One can recognise a PLD phosphodiesterase domain in the interval 307–334 (FTIQNNTKLLIVDDEYVHITSANFDGTH).

The protein belongs to the orthopoxvirus OPG057 family. As to quaternary structure, interacts with protein OPG190. Post-translationally, palmitoylated. Attachment of the palmitate moiety is essential for correct intracellular targeting and protein function.

The protein localises to the virion membrane. Its subcellular location is the host Golgi apparatus. The protein resides in the host trans-Golgi network. It localises to the host endoplasmic reticulum membrane. It carries out the reaction a 1,2-diacyl-sn-glycero-3-phosphocholine + H2O = a 1,2-diacyl-sn-glycero-3-phosphate + choline + H(+). In terms of biological role, major envelope protein that plays a role in the biogenesis of the viral double membrane and in egress of virus from the host cell. Produces the wrapped form of virus that is required for cell-to-cell spread. Acts as a lipase with broad specificity including phospholipase C, phospholipase A, and triacylglycerol lipase activities. The polypeptide is Envelope phospholipase OPG057 (OPG057) (Cynomys gunnisoni (Gunnison's prairie dog)).